We begin with the raw amino-acid sequence, 283 residues long: Urease accessory protein UreD (283 aa).

This sequence belongs to the UreD family. UreD, UreF and UreG form a complex that acts as a GTP-hydrolysis-dependent molecular chaperone, activating the urease apoprotein by helping to assemble the nickel containing metallocenter of UreC. The UreE protein probably delivers the nickel.

Its subcellular location is the cytoplasm. Required for maturation of urease via the functional incorporation of the urease nickel metallocenter. In Acaryochloris marina (strain MBIC 11017), this protein is Urease accessory protein UreD.